The following is a 298-amino-acid chain: tRNA (guanine(9)-N1)-methyltransferase (298 aa).

A compositionally biased stretch (polar residues) spans 1 to 10; it reads MSDTSENSNA. Positions 1-44 are disordered; that stretch reads MSDTSENSNAEIPADTSDVKDKPKPIVRAPQFPPPPEGISKSQW. In terms of domain architecture, SAM-dependent MTase TRM10-type spans 96–285; sequence PPKVNLNQSD…SVLPPRKLEV (190 aa). Residues 192–193, G212, 216–220, C224, L238, and 250–252 each bind S-adenosyl-L-methionine; these read LT, DKNRH, and KVL. Residue D216 is the Proton acceptor of the active site.

It belongs to the class IV-like SAM-binding methyltransferase superfamily. TRM10 family. As to quaternary structure, monomer.

The protein resides in the cytoplasm. The protein localises to the nucleus. It catalyses the reaction guanosine(9) in tRNA + S-adenosyl-L-methionine = N(1)-methylguanosine(9) in tRNA + S-adenosyl-L-homocysteine + H(+). S-adenosyl-L-methionine-dependent guanine N(1)-methyltransferase that catalyzes the formation of N(1)-methylguanine at position 9 (m1G9) in cytoplasmic tRNA. The sequence is that of tRNA (guanine(9)-N1)-methyltransferase from Kluyveromyces lactis (strain ATCC 8585 / CBS 2359 / DSM 70799 / NBRC 1267 / NRRL Y-1140 / WM37) (Yeast).